We begin with the raw amino-acid sequence, 185 residues long: Elongation factor P (185 aa).

It belongs to the elongation factor P family.

It localises to the cytoplasm. Its pathway is protein biosynthesis; polypeptide chain elongation. Functionally, involved in peptide bond synthesis. Stimulates efficient translation and peptide-bond synthesis on native or reconstituted 70S ribosomes in vitro. Probably functions indirectly by altering the affinity of the ribosome for aminoacyl-tRNA, thus increasing their reactivity as acceptors for peptidyl transferase. The protein is Elongation factor P of Burkholderia multivorans (strain ATCC 17616 / 249).